The primary structure comprises 223 residues: ATP phosphoribosyltransferase (223 aa).

The protein belongs to the ATP phosphoribosyltransferase family. Short subfamily. As to quaternary structure, heteromultimer composed of HisG and HisZ subunits.

It is found in the cytoplasm. It catalyses the reaction 1-(5-phospho-beta-D-ribosyl)-ATP + diphosphate = 5-phospho-alpha-D-ribose 1-diphosphate + ATP. It participates in amino-acid biosynthesis; L-histidine biosynthesis; L-histidine from 5-phospho-alpha-D-ribose 1-diphosphate: step 1/9. In terms of biological role, catalyzes the condensation of ATP and 5-phosphoribose 1-diphosphate to form N'-(5'-phosphoribosyl)-ATP (PR-ATP). Has a crucial role in the pathway because the rate of histidine biosynthesis seems to be controlled primarily by regulation of HisG enzymatic activity. The chain is ATP phosphoribosyltransferase from Novosphingobium aromaticivorans (strain ATCC 700278 / DSM 12444 / CCUG 56034 / CIP 105152 / NBRC 16084 / F199).